Here is a 480-residue protein sequence, read N- to C-terminus: Protein nucleotidyltransferase YdiU (480 aa).

Residues Gly86, Gly88, Arg89, Lys109, Asp121, Gly122, Arg172, and Arg179 each contribute to the ATP site. The Proton acceptor role is filled by Asp248. Residues Asn249 and Asp258 each contribute to the Mg(2+) site. Asp258 contacts ATP.

The protein belongs to the SELO family. Requires Mg(2+) as cofactor. The cofactor is Mn(2+).

The catalysed reaction is L-seryl-[protein] + ATP = 3-O-(5'-adenylyl)-L-seryl-[protein] + diphosphate. It catalyses the reaction L-threonyl-[protein] + ATP = 3-O-(5'-adenylyl)-L-threonyl-[protein] + diphosphate. The enzyme catalyses L-tyrosyl-[protein] + ATP = O-(5'-adenylyl)-L-tyrosyl-[protein] + diphosphate. It carries out the reaction L-histidyl-[protein] + UTP = N(tele)-(5'-uridylyl)-L-histidyl-[protein] + diphosphate. The catalysed reaction is L-seryl-[protein] + UTP = O-(5'-uridylyl)-L-seryl-[protein] + diphosphate. It catalyses the reaction L-tyrosyl-[protein] + UTP = O-(5'-uridylyl)-L-tyrosyl-[protein] + diphosphate. Its function is as follows. Nucleotidyltransferase involved in the post-translational modification of proteins. It can catalyze the addition of adenosine monophosphate (AMP) or uridine monophosphate (UMP) to a protein, resulting in modifications known as AMPylation and UMPylation. This Enterobacter sp. (strain 638) protein is Protein nucleotidyltransferase YdiU.